Reading from the N-terminus, the 233-residue chain is PEP2-like protein NECHADRAFT_97050 (233 aa).

Belongs to the PEP2 family.

Its function is as follows. May contribute to the ability of the fungus to cause disease on pea plants. This chain is PEP2-like protein NECHADRAFT_97050, found in Fusarium vanettenii (strain ATCC MYA-4622 / CBS 123669 / FGSC 9596 / NRRL 45880 / 77-13-4) (Fusarium solani subsp. pisi).